The chain runs to 201 residues: dITP/XTP pyrophosphatase (201 aa).

8 to 13 (SNNPGK) provides a ligand contact to substrate. Residues Glu40 and Asp69 each contribute to the Mg(2+) site. Residue Asp69 is the Proton acceptor of the active site. Residues Ser70, 155–158 (FGYD), Lys178, and 183–184 (HR) each bind substrate.

The protein belongs to the HAM1 NTPase family. As to quaternary structure, homodimer. The cofactor is Mg(2+).

It catalyses the reaction XTP + H2O = XMP + diphosphate + H(+). The enzyme catalyses dITP + H2O = dIMP + diphosphate + H(+). It carries out the reaction ITP + H2O = IMP + diphosphate + H(+). Its function is as follows. Pyrophosphatase that catalyzes the hydrolysis of nucleoside triphosphates to their monophosphate derivatives, with a high preference for the non-canonical purine nucleotides XTP (xanthosine triphosphate), dITP (deoxyinosine triphosphate) and ITP. Seems to function as a house-cleaning enzyme that removes non-canonical purine nucleotides from the nucleotide pool, thus preventing their incorporation into DNA/RNA and avoiding chromosomal lesions. The protein is dITP/XTP pyrophosphatase of Ralstonia nicotianae (strain ATCC BAA-1114 / GMI1000) (Ralstonia solanacearum).